Consider the following 86-residue polypeptide: MKNLIAELLFKLAQKEEESKELCAQVEALEIIVTAMLRNMAQNDQQRLIDQVEGALYEVKPDASIPDDDTELLRNYVKKLLKHPRQ.

Positions 1-36 (MKNLIAELLFKLAQKEEESKELCAQVEALEIIVTAM) form a coiled coil.

The protein belongs to the IraP family. Interacts with RssB.

It localises to the cytoplasm. Inhibits RpoS proteolysis by regulating RssB activity, thereby increasing the stability of the sigma stress factor RpoS especially during phosphate starvation, but also in stationary phase and during nitrogen starvation. Its effect on RpoS stability is due to its interaction with RssB, which probably blocks the interaction of RssB with RpoS, and the consequent delivery of the RssB-RpoS complex to the ClpXP protein degradation pathway. The sequence is that of Anti-adapter protein IraP from Escherichia coli O7:K1 (strain IAI39 / ExPEC).